Here is a 550-residue protein sequence, read N- to C-terminus: Chaperonin GroEL (550 aa).

ATP-binding positions include 30–33, Lys-51, 87–91, Gly-415, and Asp-496; these read TLGP and DGTTT. Residues 526 to 550 are disordered; it reads PEDEKMPPMPPGGGMGGMGGMGGMY. The span at 537-550 shows a compositional bias: gly residues; sequence GGGMGGMGGMGGMY.

The protein belongs to the chaperonin (HSP60) family. Forms a cylinder of 14 subunits composed of two heptameric rings stacked back-to-back. Interacts with the co-chaperonin GroES.

The protein localises to the cytoplasm. It carries out the reaction ATP + H2O + a folded polypeptide = ADP + phosphate + an unfolded polypeptide.. Functionally, together with its co-chaperonin GroES, plays an essential role in assisting protein folding. The GroEL-GroES system forms a nano-cage that allows encapsulation of the non-native substrate proteins and provides a physical environment optimized to promote and accelerate protein folding. This chain is Chaperonin GroEL, found in Chloroherpeton thalassium (strain ATCC 35110 / GB-78).